A 205-amino-acid chain; its full sequence is Transcriptional regulator GfcR (205 aa).

This sequence belongs to the purine/pyrimidine phosphoribosyltransferase family. GfcR subfamily.

This is Transcriptional regulator GfcR from Methanococcus maripaludis (strain C5 / ATCC BAA-1333).